Here is a 417-residue protein sequence, read N- to C-terminus: Secernin-3 (417 aa).

A propeptide spanning residues 1-5 is cleaved from the precursor; that stretch reads MYPRS. Cys6 is a catalytic residue. Position 6 is a glyoxylic acid (Cys); alternate (Cys6). Position 6 is a pyruvic acid (Cys); alternate (Cys6).

It belongs to the peptidase C69 family. Secernin subfamily.

Its function is as follows. Plays a role in thermal nociception. This Danio rerio (Zebrafish) protein is Secernin-3 (scrn3).